Here is a 1292-residue protein sequence, read N- to C-terminus: ABC multidrug transporter MDR5 (1292 aa).

A disordered region spans residues 1–43; that stretch reads MTEEPKPVTPVLRDGEAGLDTTAPTEAGSLGEEAPKKEADGIV. The next 2 membrane-spanning stretches (helical) occupy residues 79 to 99 and 128 to 148; these read ICGF…TIIF and LWFV…TICF. The ABC transmembrane type-1 1 domain maps to 81 to 370; that stretch reads GFFAAVASGT…IAPTLGEFTK (290 aa). Asn149 carries an N-linked (GlcNAc...) asparagine glycan. Transmembrane regions (helical) follow at residues 202-222, 226-246, 314-334, and 344-364; these read VGTC…AFTQ, LTLP…ITVA, EFFI…KLLL, and ILTV…IAPT. The 246-residue stretch at 405 to 650 folds into the ABC transporter 1 domain; sequence LELSNAVFSY…KGQYWSLVNA (246 aa). 440–447 contributes to the ATP binding site; the sequence is GASGSGKS. Residue Asn494 is glycosylated (N-linked (GlcNAc...) asparagine). Residues 656–691 form a disordered region; sequence ASDDSSSDTDKETDTQPAEILEKHATTKSTHSKVPH. Basic and acidic residues predominate over residues 663-680; sequence DTDKETDTQPAEILEKHA. 2 helical membrane passes run 720 to 740 and 768 to 788; these read HWLF…AFPA and LMFF…GFFL. The ABC transmembrane type-1 2 domain occupies 725–1012; it reads LLGGIASVVS…IFGFTMNTTK (288 aa). Residue Asn820 is glycosylated (N-linked (GlcNAc...) asparagine). Helical transmembrane passes span 844 to 864, 866 to 886, 949 to 969, and 986 to 1006; these read IGLI…ALVT, WKLA…AGFI, IAMI…ALAF, and FFVI…IFGF. Asn1009, Asn1031, and Asn1052 each carry an N-linked (GlcNAc...) asparagine glycan. Residues 1048 to 1285 form the ABC transporter 2 domain; it reads VEFRNVSFSY…KGRYFEMCKA (238 aa). 1083–1090 is an ATP binding site; that stretch reads GPSGCGKT.

It belongs to the ABC transporter superfamily. ABCB family. Multidrug resistance exporter (TC 3.A.1.201) subfamily.

It localises to the cell membrane. The enzyme catalyses itraconazole(in) + ATP + H2O = itraconazole(out) + ADP + phosphate + H(+). Functionally, pleiotropic ABC efflux transporter involved in the modulation susceptibility to itraconazole. The polypeptide is ABC multidrug transporter MDR5 (Trichophyton rubrum (strain ATCC MYA-4607 / CBS 118892) (Athlete's foot fungus)).